We begin with the raw amino-acid sequence, 356 residues long: Cyclin-dependent kinase 5 activator 1 (356 aa).

2 disordered regions span residues 1 to 53 (MGAN…AKES) and 66 to 99 (IQPV…FTRN). Low complexity-rich tracts occupy residues 40-49 (SNTSSRSSSN) and 71-92 (SRRS…SSDS).

Belongs to the cyclin-dependent kinase 5 activator family. As to quaternary structure, heterodimer composed of a catalytic subunit cdk-5 and a regulatory subunit cdka-1. Interaction with cdka-1 is required for cdk-5 activation. As to expression, expressed in all classes of neurons in the ventral cord.

Its subcellular location is the cytoplasm. The protein localises to the cell projection. It is found in the dendrite. The protein resides in the axon. Activator of the kinase cdk-5. In several motor neurons, promotes the polarized trafficking of synaptic vesicles and dense-core vesicles. In the ventral nerve cord, regulates the synaptic localization of the glutamate receptor, glr-1. In DA motor neurons, regulates axonal transport of synaptic vesicle precursors by inhibiting dynein-mediated retrograde transport. Regulates the polarized distribution of dense-core vesicles in DB motor neurons. May regulate these processes in association with cdk-5. May also play a role in GABAergic synaptic vesicle localization in the ventral nerve cord. The sequence is that of Cyclin-dependent kinase 5 activator 1 from Caenorhabditis elegans.